The chain runs to 165 residues: MSKKAIYPGTFDPFTNGHLDVLERALNIFEHVDVVLAENSQKQTLFSVEERFDMVREVVRDLPNVSVDVLREGLLADYARQAGASAIVRGVRQVKDFEYEFQMSLLNRHLYPEVTTVFLMPNVKYTYVASTIIREVSMLGGDVSKFVHPYVLDQLSRKRAERRAH.

Thr-10 is a substrate binding site. ATP contacts are provided by residues 10-11 (TF) and His-18. Substrate contacts are provided by Lys-42, Leu-75, and Arg-89. ATP is bound by residues 90–92 (GVR), Glu-100, and 125–131 (YTYVAST).

Belongs to the bacterial CoaD family. In terms of assembly, homohexamer. Mg(2+) is required as a cofactor.

Its subcellular location is the cytoplasm. The catalysed reaction is (R)-4'-phosphopantetheine + ATP + H(+) = 3'-dephospho-CoA + diphosphate. The protein operates within cofactor biosynthesis; coenzyme A biosynthesis; CoA from (R)-pantothenate: step 4/5. Functionally, reversibly transfers an adenylyl group from ATP to 4'-phosphopantetheine, yielding dephospho-CoA (dPCoA) and pyrophosphate. The chain is Phosphopantetheine adenylyltransferase from Chlorobaculum tepidum (strain ATCC 49652 / DSM 12025 / NBRC 103806 / TLS) (Chlorobium tepidum).